The following is a 512-amino-acid chain: ATP synthase subunit alpha (512 aa).

169–176 (GDRQTGKT) serves as a coordination point for ATP.

This sequence belongs to the ATPase alpha/beta chains family. In terms of assembly, F-type ATPases have 2 components, CF(1) - the catalytic core - and CF(0) - the membrane proton channel. CF(1) has five subunits: alpha(3), beta(3), gamma(1), delta(1), epsilon(1). CF(0) has three main subunits: a(1), b(2) and c(9-12). The alpha and beta chains form an alternating ring which encloses part of the gamma chain. CF(1) is attached to CF(0) by a central stalk formed by the gamma and epsilon chains, while a peripheral stalk is formed by the delta and b chains.

The protein resides in the cell inner membrane. It catalyses the reaction ATP + H2O + 4 H(+)(in) = ADP + phosphate + 5 H(+)(out). Produces ATP from ADP in the presence of a proton gradient across the membrane. The alpha chain is a regulatory subunit. This is ATP synthase subunit alpha from Orientia tsutsugamushi (strain Boryong) (Rickettsia tsutsugamushi).